A 55-amino-acid chain; its full sequence is UPF0391 membrane protein Sfum_0248 (55 aa).

The next 2 helical transmembrane spans lie at Trp-4–Ile-24 and Ala-28–Ser-48.

The protein belongs to the UPF0391 family.

It localises to the cell membrane. The sequence is that of UPF0391 membrane protein Sfum_0248 from Syntrophobacter fumaroxidans (strain DSM 10017 / MPOB).